The sequence spans 537 residues: MYSVESKFERDSRRDAQRTANLDFDARVPIPFSVFPSSYRSDAVPETTLTRVEGEVNLDRTSHVEREDTRTSAPLPDPRVYGREEVDIHISKDRLHAPSRKGDDFQVIYEDRAHKDSRVPEVELSRERWKRSENNAKQNKNKNNTSTRRSGDVLKAVSAKKVAPQAQTRADEKASYQLTQKARYRESTSRYEPLPPKPVYDQALESQLDITEREYRRRTDPTYDVNLSYGRHQAPVDSYQAYQPQQTSDVSLHRSKTEIDVSYDKAYTPKPLETRKGDSFSRSELTVESVPSRPSSASSISQVKVLKPYTAIDQPPARKMGYYDDDGNYHSFRRGVERAVDRITHPFHHHHHHHDREEVVIADERGPVRYRDGVREDVRIVEPRASKTTAESVPIPCHFIRIGDILILQGRPCQVIRISVSPQTGQHRYLGVDLFTRQLQEESSFVSNPSPSVVVQTMLGPVYKTYRILDLHEDGTITAMTETGDVKQALPVVTQGQLFRKIRDAFSEGRGSVRALVINDGGRELVVDYKVIHGSRL.

Composition is skewed to basic and acidic residues over residues 1–17, 59–70, and 116–134; these read MYSV…RDAQ, DRTSHVEREDTR, and DSRV…RSEN. Disordered regions lie at residues 1-20, 59-79, 116-200, and 269-295; these read MYSV…QRTA, DRTS…PDPR, DSRV…KPVY, and PKPL…SRPS. The segment covering 135–144 has biased composition (low complexity); that stretch reads NAKQNKNKNN. Basic and acidic residues predominate over residues 272–281; it reads LETRKGDSFS.

This sequence belongs to the eIF-5A family. Hex1 subfamily. In terms of assembly, forms oligomers. Self-assembles into hexagonal rods. Binds directly or indirectly to the Woronin body tether lah.

It localises to the cell septum. Its subcellular location is the cytoplasm. Its function is as follows. Major component of Woronin bodies, fungal-specific organelles that occlude septal pores in order to separate intact from damaged compartments. HexA binds directly or indirectly to the Woronin body tether that in turn is anchored at the rim of the septal pore. Woronin bodies are important for stress resistance and virulence. The sequence is that of Woronin body major protein hexA from Aspergillus fumigatus (strain ATCC MYA-4609 / CBS 101355 / FGSC A1100 / Af293) (Neosartorya fumigata).